The sequence spans 292 residues: Ribosomal protein L11 methyltransferase (292 aa).

Threonine 144, glycine 165, aspartate 187, and asparagine 229 together coordinate S-adenosyl-L-methionine.

This sequence belongs to the methyltransferase superfamily. PrmA family.

The protein resides in the cytoplasm. The enzyme catalyses L-lysyl-[protein] + 3 S-adenosyl-L-methionine = N(6),N(6),N(6)-trimethyl-L-lysyl-[protein] + 3 S-adenosyl-L-homocysteine + 3 H(+). Its function is as follows. Methylates ribosomal protein L11. The sequence is that of Ribosomal protein L11 methyltransferase from Pseudomonas putida (strain W619).